The chain runs to 719 residues: MQGETRSISFDGREIRLTTRRYAPQAGGSVLIECGDTAVLVTATRANGREGIDFLPLTCDYEERLYAAGRIPGSFMRRESRPPERATLACRLIDRPIRPLFPSWMRDDLQIVATVMSVDERVPPDVLAVTGASLATLLAKIPFYGPMAAVRVGLLGDDFILNPSYREIERSELDLVVAGTAEGVVMVEAGAQQLPEEDMIEAIDFGYEAVLELIRHQKETIAELGIEQVVPEKPAEDTTVPDYLAKQCTKDIGAVLSQFTLTKAERDSQLDSIKAKAAEAIAALKETDAVRAAVSSNGKLLGNSFKALTKSMMRAQIVKDGKRVDGRSLDQVRPISAAAGVLPKRVHGSGLFQRGLTQVLSTATLGTPSDAQEMDDLNPSNEKHYLHHYNFPPYSVGETRPMRSPGRREIGHGALAERALLPVLPPKESFPYVLRVVSEVLSSNGSTSMGSVCGSTLALMDAGVPIAAPVAGAAMGLIREGSEVRVLTDIQGIEDFLGDMDFKVAGTEKGITALQMDMKITGLAMKTIGEAVTQARPARLHILEKMLEALDKPRDTMSPHAPRRLSFRIDPELIGTVIGPGGRTIKGITERTNTKIDIEDTGIVTVASHDGAAAEEAQKIIEGLTRRVSEGEYFDGKVTRVIPIGAFVEILPGKEGMIHISQLSDQRVEKVEDVVNVGDEVRVRVREIDNRGRINLTLRGVPQDGSDPQPTVILPIGES.

Mg(2+)-binding residues include D495 and D501. Residues 562–621 (PRRLSFRIDPELIGTVIGPGGRTIKGITERTNTKIDIEDTGIVTVASHDGAAAEEAQKII) form the KH domain. The region spanning 631 to 699 (GEYFDGKVTR…NRGRINLTLR (69 aa)) is the S1 motif domain. Positions 699–719 (RGVPQDGSDPQPTVILPIGES) are disordered.

It belongs to the polyribonucleotide nucleotidyltransferase family. Requires Mg(2+) as cofactor.

Its subcellular location is the cytoplasm. It carries out the reaction RNA(n+1) + phosphate = RNA(n) + a ribonucleoside 5'-diphosphate. Involved in mRNA degradation. Catalyzes the phosphorolysis of single-stranded polyribonucleotides processively in the 3'- to 5'-direction. The protein is Polyribonucleotide nucleotidyltransferase of Synechococcus sp. (strain RCC307).